We begin with the raw amino-acid sequence, 166 residues long: Large ribosomal subunit protein uL10 (166 aa).

This sequence belongs to the universal ribosomal protein uL10 family. In terms of assembly, part of the ribosomal stalk of the 50S ribosomal subunit. The N-terminus interacts with L11 and the large rRNA to form the base of the stalk. The C-terminus forms an elongated spine to which L12 dimers bind in a sequential fashion forming a multimeric L10(L12)X complex.

In terms of biological role, forms part of the ribosomal stalk, playing a central role in the interaction of the ribosome with GTP-bound translation factors. The sequence is that of Large ribosomal subunit protein uL10 from Shewanella oneidensis (strain ATCC 700550 / JCM 31522 / CIP 106686 / LMG 19005 / NCIMB 14063 / MR-1).